Here is a 529-residue protein sequence, read N- to C-terminus: UDP-glucuronosyltransferase 2B7 (529 aa).

The N-terminal stretch at 1–23 (MSVKWTSVILLIQLSFCFSSGNC) is a signal peptide. N-linked (GlcNAc...) asparagine glycans are attached at residues asparagine 67, asparagine 68, and asparagine 315. Residues 373–379 (THGGANG) and aspartate 398 each bind UDP-alpha-D-glucuronate. Residues 493 to 509 (VIGFLLVCVATVIFIVT) form a helical membrane-spanning segment.

This sequence belongs to the UDP-glycosyltransferase family.

The protein localises to the endoplasmic reticulum membrane. It carries out the reaction glucuronate acceptor + UDP-alpha-D-glucuronate = acceptor beta-D-glucuronoside + UDP + H(+). It catalyses the reaction 17alpha-estradiol + UDP-alpha-D-glucuronate = 17alpha-estradiol 17-O-(beta-D-glucuronate) + UDP + H(+). The catalysed reaction is 17beta-estradiol + UDP-alpha-D-glucuronate = 17beta-estradiol 17-O-(beta-D-glucuronate) + UDP + H(+). The enzyme catalyses 2-hydroxy-17beta-estradiol + UDP-alpha-D-glucuronate = 2-hydroxy-17beta-estradiol 3-O-(beta-D-glucuronate) + UDP + H(+). It carries out the reaction 4-hydroxy-17beta-estradiol + UDP-alpha-D-glucuronate = 17beta-estradiol 4-O-(beta-D-glucuronate) + UDP + H(+). It catalyses the reaction 4-hydroxyestrone + UDP-alpha-D-glucuronate = estrone 4-O-(beta-D-glucuronate) + UDP + H(+). The catalysed reaction is 16alpha-hydroxyestrone + UDP-alpha-D-glucuronate = 16alpha-hydroxyestrone 16-O-(beta-D-glucuronate) + UDP + H(+). The enzyme catalyses 16alpha,17beta-estriol + UDP-alpha-D-glucuronate = 16alpha,17beta-estriol 16-O-(beta-D-glucuronate) + UDP + H(+). It carries out the reaction 16beta,17beta-estriol + UDP-alpha-D-glucuronate = 16beta,17beta-estriol 16-O-(beta-D-glucuronate) + UDP + H(+). It catalyses the reaction 16alpha,17alpha-estriol + UDP-alpha-D-glucuronate = 16alpha,17alpha-estriol 16-O-(beta-D-glucuronate) + UDP + H(+). The catalysed reaction is 16alpha,17alpha-estriol + UDP-alpha-D-glucuronate = 16alpha,17alpha-estriol 17-O-(beta-D-glucuronate) + UDP + H(+). The enzyme catalyses epitestosterone + UDP-alpha-D-glucuronate = epitestosterone 17-O-(beta-D-glucuronate) + UDP + H(+). It carries out the reaction hyodeoxycholate + UDP-alpha-D-glucuronate = hyodeoxycholate 6-O-(beta-D-glucuronate) + UDP + H(+). It catalyses the reaction hyocholate + UDP-alpha-D-glucuronate = hyocholate 6-O-(beta-D-glucuronate) + UDP + H(+). The catalysed reaction is all-trans-retinoate + UDP-alpha-D-glucuronate = all-trans-retinoyl-1-O-(beta-D-glucuronate) + UDP. The enzyme catalyses all-trans-4-hydroxyretinoate + UDP-alpha-D-glucuronate = all-trans-4-hydroxy-4-O-(beta-D-glucuronide)-retinoate + UDP + H(+). It carries out the reaction (E)-ferulate + UDP-alpha-D-glucuronate = (E)-ferulic acid beta-D-glucuronate ester + UDP. It catalyses the reaction 8-iso-prostaglandin F2alpha + UDP-alpha-D-glucuronate = 8-iso-prostaglandin F2alpha-glucuronide + UDP + H(+). The catalysed reaction is 5-epi-5-F2t-IsoP + UDP-alpha-D-glucuronate = 5-epi-5-F2t-IsoP-glucuronide + UDP + H(+). The enzyme catalyses (5Z,8Z,11Z,14Z)-eicosatetraenoate + UDP-alpha-D-glucuronate = O-[(5Z),(8Z),(11Z),(14Z)-eicosatetraenoyl]-beta-D-glucuronate + UDP. It carries out the reaction 15-hydroxy-(5Z,8Z,11Z,13E)-eicosatetraenoate + UDP-alpha-D-glucuronate = 15-O-(beta-D-glucuronosyl)-(5Z,8Z,11Z,14Z)-eicosatetraenoate + UDP + H(+). It catalyses the reaction 20-hydroxy-(5Z,8Z,11Z,14Z)-eicosatetraenoate + UDP-alpha-D-glucuronate = 20-O-(beta-D-glucuronosyl)-(5Z,8Z,11Z,14Z)-eicosatetraenoate + UDP + H(+). The catalysed reaction is (E)-ferulate + UDP-alpha-D-glucuronate = (E)-4-O-(beta-D-glucuronosyl)-ferulate + UDP + H(+). The enzyme catalyses prostaglandin B1 + UDP-alpha-D-glucuronate = 15-O-(beta-D-glucuronosyl)-prostaglandin B1 + UDP + H(+). It carries out the reaction mycophenolate + UDP-alpha-D-glucuronate = mycophenolic acid O-acyl-beta-D-glucuronide + UDP. It catalyses the reaction losartan + UDP-alpha-D-glucuronate = losartan-2-N-beta-D-glucuronide + UDP. The catalysed reaction is candesartan + UDP-alpha-D-glucuronate = candesartan O-beta-D-glucuronoside + UDP. The enzyme catalyses candesartan + UDP-alpha-D-glucuronate = candesartan-2-N-beta-D-glucuronide + UDP. It carries out the reaction zolasartan + UDP-alpha-D-glucuronate = zolarsartan O-beta-D-glucuronoside + UDP. UDP-glucuronosyltransferase (UGT) that catalyzes phase II biotransformation reactions in which lipophilic substrates are conjugated with glucuronic acid to increase the metabolite's water solubility, thereby facilitating excretion into either the urine or bile. Essential for the elimination and detoxification of drugs, xenobiotics and endogenous compounds. Catalyzes the glucuronidation of endogenous steroid hormones such as androgens (epitestosterone, androsterone) and estrogens (estradiol, epiestradiol, estriol, catechol estrogens). Also regulates the levels of retinoic acid, a major metabolite of vitamin A involved in apoptosis, cellular growth and differentiation, and embryonic development. Contributes to bile acid (BA) detoxification by catalyzing the glucuronidation of BA substrates, which are natural detergents for dietary lipids absorption. Involved in the glucuronidation of arachidonic acid (AA) and AA-derived eicosanoids including 15-HETE, 20-HETE, PGE2, PGB1 and F2-isoprostanes (8-iso-PGF2alpha and 5-epi-5-F2t-IsoP). Involved in the glucuronidation of the phytochemical ferulic acid at the phenolic or the carboxylic acid group. Involved in the glucuronidation of the AGTR1 angiotensin receptor antagonist losartan, caderastan and zolarsatan, drugs which can inhibit the effect of angiotensin II. Also metabolizes mycophenolate, an immunosuppressive agent. The chain is UDP-glucuronosyltransferase 2B7 from Homo sapiens (Human).